Here is a 432-residue protein sequence, read N- to C-terminus: Adenylosuccinate synthetase (432 aa).

Residues 12–18 (GDEGKGK) and 40–42 (GHT) each bind GTP. Asp13 functions as the Proton acceptor in the catalytic mechanism. Asp13 and Gly40 together coordinate Mg(2+). IMP is bound by residues 13 to 16 (DEGK), 38 to 41 (NAGH), Thr132, Arg146, Gln226, Thr241, and Arg305. The active-site Proton donor is the His41. A substrate-binding site is contributed by 301 to 307 (TVTGRKR). GTP is bound by residues Arg307, 333–335 (KLD), and 415–417 (STS).

It belongs to the adenylosuccinate synthetase family. Homodimer. Mg(2+) is required as a cofactor.

Its subcellular location is the cytoplasm. The enzyme catalyses IMP + L-aspartate + GTP = N(6)-(1,2-dicarboxyethyl)-AMP + GDP + phosphate + 2 H(+). Its pathway is purine metabolism; AMP biosynthesis via de novo pathway; AMP from IMP: step 1/2. Plays an important role in the de novo pathway of purine nucleotide biosynthesis. Catalyzes the first committed step in the biosynthesis of AMP from IMP. This is Adenylosuccinate synthetase from Allorhizobium ampelinum (strain ATCC BAA-846 / DSM 112012 / S4) (Agrobacterium vitis (strain S4)).